Reading from the N-terminus, the 1382-residue chain is Hepatocyte growth factor receptor (1382 aa).

An N-terminal signal peptide occupies residues 1–24; it reads MKAPAVLAPGILVLLFTLVQKSYG. At 25-935 the chain is on the extracellular side; that stretch reads ECKEALVKSE…VQPDQNFTGL (911 aa). The region spanning 27 to 516 is the Sema domain; the sequence is KEALVKSEMN…TGKKITRIPL (490 aa). A glycan (N-linked (GlcNAc...) asparagine) is linked at Asn45. 4 cysteine pairs are disulfide-bonded: Cys95/Cys101, Cys98/Cys160, Cys133/Cys141, and Cys173/Cys176. N-linked (GlcNAc...) asparagine glycosylation occurs at Asn106. N-linked (GlcNAc...) asparagine glycans are attached at residues Asn203 and Asn359. 2 disulfide bridges follow: Cys299/Cys364 and Cys386/Cys398. 2 N-linked (GlcNAc...) asparagine glycosylation sites follow: Asn400 and Asn406. 4 cysteine pairs are disulfide-bonded: Cys521–Cys539, Cys527–Cys562, Cys530–Cys546, and Cys542–Cys552. IPT/TIG domains are found at residues 564-656, 658-740, and 743-837; these read PAIY…FSYV, PIIT…FSYQ, and PIVY…LIYV. Thr583 carries an O-linked (Man) threonine glycan. 2 N-linked (GlcNAc...) asparagine glycosylation sites follow: Asn608 and Asn636. Thr677 and Thr762 each carry an O-linked (Man) threonine glycan. N-linked (GlcNAc...) asparagine glycosylation is found at Asn786, Asn880, and Asn931. Residues 936–956 form a helical membrane-spanning segment; that stretch reads IAGVISISTIVLLLLGLFLWL. At 957–1379 the chain is on the cytoplasmic side; that stretch reads KRKKQIKDLG…LSSQDNIDGE (423 aa). Phosphoserine is present on Ser967. A Phosphothreonine modification is found at Thr978. Phosphoserine occurs at positions 991, 998, and 1001. At Tyr1004 the chain carries Phosphotyrosine. The 268-residue stretch at 1079–1346 folds into the Protein kinase domain; it reads VHFNEVIGRG…RISAIFSTFI (268 aa). ATP is bound by residues 1085 to 1093 and Lys1111; that span reads IGRGHFGCV. Asp1205 serves as the catalytic Proton acceptor. The interaction with RANBP9 stretch occupies residues 1213–1382; it reads LDEKFTVKVA…QDNIDGEGDT (170 aa). Tyr1231 is modified (phosphotyrosine). A phosphotyrosine; by autocatalysis mark is found at Tyr1235 and Tyr1236. Phosphothreonine is present on Thr1290. Residues 1321–1360 are interaction with MUC20; that stretch reads WHPRAELRPSFSELVSRISAIFSTFIGEHYVHVNATYVNV. Phosphotyrosine; by autocatalysis is present on residues Tyr1350 and Tyr1357. Phosphotyrosine is present on Tyr1366.

It belongs to the protein kinase superfamily. Tyr protein kinase family. Heterodimer made of an alpha chain (50 kDa) and a beta chain (145 kDa) which are disulfide linked. Binds PLXNB1. Interacts when phosphorylated with downstream effectors including STAT3, PIK3R1, SRC, PCLG1, GRB2 and GAB1. Interacts with SPSB1, SPSB2 and SPSB4. Interacts with INPP5D/SHIP1. When phosphorylated at Tyr-1357, interacts with INPPL1/SHIP2. Interacts with RANBP9 and RANBP10, as well as SPSB1, SPSB2, SPSB3 and SPSB4. SPSB1 binding occurs in the presence and in the absence of HGF, however HGF treatment has a positive effect on this interaction. Interacts with MUC20; prevents interaction with GRB2 and suppresses hepatocyte growth factor-induced cell proliferation. Interacts with GRB10. Interacts with PTPN1 and PTPN2. Interacts with HSP90AA1 and HSP90AB1; the interaction suppresses MET kinase activity. Interacts with tensin TNS3. Interacts (when phosphorylated) with tensin TNS4 (via SH2 domain); the interaction increases MET protein stability by inhibiting MET endocytosis and subsequent lysosomal degradation. As to quaternary structure, (Microbial infection) Interacts with L.monocytogenes InlB. InlB probably dimerizes upon binding to MET, which encourages subsequent dimerization of MET. Post-translationally, autophosphorylated in response to ligand binding on Tyr-1235 and Tyr-1236 in the kinase domain leading to further phosphorylation of Tyr-1350 and Tyr-1357 in the C-terminal multifunctional docking site. Dephosphorylated by PTPRJ at Tyr-1350 and Tyr-1366. Dephosphorylated by PTPN1 and PTPN2. In terms of processing, ubiquitinated. Ubiquitination by CBL regulates the receptor stability and activity through proteasomal degradation. (Microbial infection) Tyrosine phosphorylation is stimulated by L.monocytogenes InlB. Post-translationally, O-mannosylation of IPT/TIG domains by TMEM260 is required for protein maturation. O-mannosylated residues are composed of single mannose glycans that are not elongated or modified.

It is found in the membrane. It carries out the reaction L-tyrosyl-[protein] + ATP = O-phospho-L-tyrosyl-[protein] + ADP + H(+). With respect to regulation, in its inactive state, the C-terminal tail interacts with the catalytic domain and inhibits the kinase activity. Upon ligand binding, the C-terminal tail is displaced and becomes phosphorylated, thus increasing the kinase activity. Functionally, receptor tyrosine kinase that transduces signals from the extracellular matrix into the cytoplasm by binding to hepatocyte growth factor/HGF ligand. Regulates many physiological processes including proliferation, scattering, morphogenesis and survival. Ligand binding at the cell surface induces autophosphorylation of MET on its intracellular domain that provides docking sites for downstream signaling molecules. Following activation by ligand, interacts with the PI3-kinase subunit PIK3R1, PLCG1, SRC, GRB2, STAT3 or the adapter GAB1. Recruitment of these downstream effectors by MET leads to the activation of several signaling cascades including the RAS-ERK, PI3 kinase-AKT, or PLCgamma-PKC. The RAS-ERK activation is associated with the morphogenetic effects while PI3K/AKT coordinates prosurvival effects. During embryonic development, MET signaling plays a role in gastrulation, development and migration of muscles and neuronal precursors, angiogenesis and kidney formation. In adults, participates in wound healing as well as organ regeneration and tissue remodeling. Also promotes differentiation and proliferation of hematopoietic cells. Its function is as follows. (Microbial infection) Acts as a receptor for Listeria monocytogenes internalin InlB, mediating entry of the pathogen into cells. In Canis lupus familiaris (Dog), this protein is Hepatocyte growth factor receptor (MET).